Here is a 248-residue protein sequence, read N- to C-terminus: Phosphoribosylaminoimidazole-succinocarboxamide synthase (248 aa).

Belongs to the SAICAR synthetase family.

It carries out the reaction 5-amino-1-(5-phospho-D-ribosyl)imidazole-4-carboxylate + L-aspartate + ATP = (2S)-2-[5-amino-1-(5-phospho-beta-D-ribosyl)imidazole-4-carboxamido]succinate + ADP + phosphate + 2 H(+). It functions in the pathway purine metabolism; IMP biosynthesis via de novo pathway; 5-amino-1-(5-phospho-D-ribosyl)imidazole-4-carboxamide from 5-amino-1-(5-phospho-D-ribosyl)imidazole-4-carboxylate: step 1/2. The protein is Phosphoribosylaminoimidazole-succinocarboxamide synthase (purC) of Methanothermobacter thermautotrophicus (strain ATCC 29096 / DSM 1053 / JCM 10044 / NBRC 100330 / Delta H) (Methanobacterium thermoautotrophicum).